A 299-amino-acid polypeptide reads, in one-letter code: Lathosterol oxidase (299 aa).

3 consecutive transmembrane segments (helical) span residues 32–52, 79–99, and 117–137; these read ISLL…CATL, FTVK…LLEL, and IHLM…IYWI. One can recognise a Fatty acid hydroxylase domain in the interval 124 to 252; sequence VSFLFFTDML…YFTLWDRIGG (129 aa). The Histidine box-1 motif lies at 138–143; it reads HRGLHH. Positions 151–155 match the Histidine box-2 motif; that stretch reads HKPHH. Residues 186 to 206 traverse the membrane as a helical segment; sequence VFPLHKVVYLGLYVLVNVWTI. The short motif at 228–233 is the Histidine box-3 element; it reads HHTDHH. The residue at position 253 (Ser253) is a Phosphoserine. The segment at 280–299 is disordered; it reads FAENGCKGKKVGNGEFTKNK.

Belongs to the sterol desaturase family. Requires Fe cation as cofactor.

The protein localises to the endoplasmic reticulum membrane. The enzyme catalyses a Delta(7)-sterol + 2 Fe(II)-[cytochrome b5] + O2 + 2 H(+) = a Delta(5),Delta(7)-sterol + 2 Fe(III)-[cytochrome b5] + 2 H2O. It carries out the reaction lathosterol + 2 Fe(II)-[cytochrome b5] + O2 + 2 H(+) = 7-dehydrocholesterol + 2 Fe(III)-[cytochrome b5] + 2 H2O. It catalyses the reaction 5alpha-cholesta-7,24-dien-3beta-ol + 2 Fe(II)-[cytochrome b5] + O2 + 2 H(+) = 7-dehydrodesmosterol + 2 Fe(III)-[cytochrome b5] + 2 H2O. Its pathway is steroid biosynthesis; cholesterol biosynthesis. Catalyzes the penultimate step of the biosynthesis of cholesterol, the dehydrogenation of lathosterol into 7-dehydrocholesterol (7-DHC). Cholesterol is the major sterol component in mammalian membranes and a precursor for bile acid and steroid hormone synthesis. In addition to its essential role in cholesterol biosynthesis, it also indirectly regulates ferroptosis through the production of 7-DHC. By diverting the spread of damage caused by peroxyl radicals from the phospholipid components to its sterol nucleus, 7-DHC prevents this form of cell death. The protein is Lathosterol oxidase of Mus musculus (Mouse).